Consider the following 210-residue polypeptide: MSLPPEILLHGYSIGIFPMAEHRNDPDVFWVDPIRRGVFPLNGFHLSRSLARRMRRGGYQVSIDRDFAGVLDGCADRAETWINPEIRASYLALHHLGHAHSLEVWQAGQLIGGVYGVVLGAAFFGESMFSRRTDASKIALAHLVDRLRQTGFALFDTQFLTAHLASLGAVEIPRAEYRRQLERALNGAADFAAVIEQSPQGVIQRITQTS.

The protein belongs to the L/F-transferase family.

Its subcellular location is the cytoplasm. The enzyme catalyses N-terminal L-lysyl-[protein] + L-leucyl-tRNA(Leu) = N-terminal L-leucyl-L-lysyl-[protein] + tRNA(Leu) + H(+). It carries out the reaction N-terminal L-arginyl-[protein] + L-leucyl-tRNA(Leu) = N-terminal L-leucyl-L-arginyl-[protein] + tRNA(Leu) + H(+). The catalysed reaction is L-phenylalanyl-tRNA(Phe) + an N-terminal L-alpha-aminoacyl-[protein] = an N-terminal L-phenylalanyl-L-alpha-aminoacyl-[protein] + tRNA(Phe). Its function is as follows. Functions in the N-end rule pathway of protein degradation where it conjugates Leu, Phe and, less efficiently, Met from aminoacyl-tRNAs to the N-termini of proteins containing an N-terminal arginine or lysine. The chain is Leucyl/phenylalanyl-tRNA--protein transferase from Ruegeria pomeroyi (strain ATCC 700808 / DSM 15171 / DSS-3) (Silicibacter pomeroyi).